We begin with the raw amino-acid sequence, 137 residues long: Peptidyl-tRNA hydrolase ArfB (137 aa).

The segment at 102–137 (EKKRRPTKPTLGSKTRRLEGKARRSTVKAGRGKVDF) is disordered.

Belongs to the prokaryotic/mitochondrial release factor family. Associated with 70S ribosomes and polysomes.

It localises to the cytoplasm. It carries out the reaction an N-acyl-L-alpha-aminoacyl-tRNA + H2O = an N-acyl-L-amino acid + a tRNA + H(+). Its function is as follows. Rescues stalled ribosomes. Can hydrolyze peptidyl-tRNA on ribosomes stalled by both non-stop mRNAs and mRNAs that contain rare codon clusters. The chain is Peptidyl-tRNA hydrolase ArfB (arfB) from Pseudomonas putida (Arthrobacter siderocapsulatus).